Here is a 279-residue protein sequence, read N- to C-terminus: Thymidylate synthase (279 aa).

133–134 (RR) provides a ligand contact to dUMP. Residue Cys-154 is the Nucleophile of the active site. Residues 178–181 (RSND), Asn-189, and 219–221 (HIY) each bind dUMP. Residue Asp-181 coordinates (6R)-5,10-methylene-5,6,7,8-tetrahydrofolate. Ala-278 contributes to the (6R)-5,10-methylene-5,6,7,8-tetrahydrofolate binding site.

This sequence belongs to the thymidylate synthase family. Bacterial-type ThyA subfamily. In terms of assembly, homodimer.

It localises to the cytoplasm. It carries out the reaction dUMP + (6R)-5,10-methylene-5,6,7,8-tetrahydrofolate = 7,8-dihydrofolate + dTMP. Its pathway is pyrimidine metabolism; dTTP biosynthesis. In terms of biological role, catalyzes the reductive methylation of 2'-deoxyuridine-5'-monophosphate (dUMP) to 2'-deoxythymidine-5'-monophosphate (dTMP) while utilizing 5,10-methylenetetrahydrofolate (mTHF) as the methyl donor and reductant in the reaction, yielding dihydrofolate (DHF) as a by-product. This enzymatic reaction provides an intracellular de novo source of dTMP, an essential precursor for DNA biosynthesis. The protein is Thymidylate synthase of Streptococcus gordonii (strain Challis / ATCC 35105 / BCRC 15272 / CH1 / DL1 / V288).